The sequence spans 169 residues: PTS system glucose-specific EIIA component (169 aa).

A PTS EIIA type-1 domain is found at 39-143 (DVVFAEKIVG…STLTPVVISN (105 aa)). Zn(2+)-binding residues include H76 and H91. Residue H91 is the Tele-phosphohistidine intermediate; for EIIA activity of the active site. H91 carries the post-translational modification Phosphohistidine; by HPr.

Heterodimer with glycerol kinase (glpk). It depends on Zn(2+) as a cofactor.

Its subcellular location is the cytoplasm. Functionally, the phosphoenolpyruvate-dependent sugar phosphotransferase system (sugar PTS), a major carbohydrate active transport system, catalyzes the phosphorylation of incoming sugar substrates concomitantly with their translocation across the cell membrane. The enzyme II complex composed of PtsG and Crr is involved in glucose transport. In Salmonella typhi, this protein is PTS system glucose-specific EIIA component (crr).